The following is a 134-amino-acid chain: Interleukin-5 (134 aa).

Positions 1-19 are cleaved as a signal peptide; it reads MRMLLHLSLLALGAAYVYA. An O-linked (GalNAc...) threonine glycan is attached at threonine 22. Asparagine 47 carries N-linked (GlcNAc...) asparagine glycosylation.

Belongs to the IL-5 family. Homodimer; disulfide-linked. Interacts with IL5RA. Interacts with CSF2RB. In terms of tissue distribution, present in peripheral blood mononuclear cells.

Its subcellular location is the secreted. In terms of biological role, homodimeric cytokine expressed predominantly by T-lymphocytes and NK cells that plays an important role in the survival, differentiation, and chemotaxis of eosinophils. Also acts on activated and resting B-cells to induce immunoglobulin production, growth, and differentiation. Mechanistically, exerts its biological effects through a receptor composed of IL5RA subunit and the cytokine receptor common subunit beta/CSF2RB. Binding to the receptor leads to activation of various kinases including LYN, SYK and JAK2 and thereby propagates signals through the RAS-MAPK and JAK-STAT5 pathways respectively. The chain is Interleukin-5 (IL5) from Homo sapiens (Human).